The chain runs to 610 residues: Mitochondrial import receptor subunit TOM70 (610 aa).

A2 carries the N-acetylalanine modification. The Mitochondrial intermembrane portion of the chain corresponds to 2–41 (AASKPVEAAMAAAAAPASGNGVGSSGGTAAPGSGAGTLPR). A helical transmembrane segment spans residues 42 to 62 (WHVALAIGAPLLLGAGAMYLW). Topologically, residues 63–610 (SRRRRRREAG…KKYGLKPPTL (548 aa)) are cytoplasmic. The interval 69–109 (REAGGRGDASGLKRNSERKTPEGRASPALGSGPDGSGDSLE) is disordered. At R74 the chain carries Omega-N-methylarginine. Over residues 93–108 (ASPALGSGPDGSGDSL) the composition is skewed to low complexity. Phosphoserine is present on residues S94, S99, S104, S107, and S112. TPR repeat units follow at residues 116-149 (AQAA…CPTE) and 155-188 (STFY…NPKY). K187 bears the N6-acetyllysine mark. A Glycyl lysine isopeptide (Lys-Gly) (interchain with G-Cter in SUMO2) cross-link involves residue K277. TPR repeat units lie at residues 296-329 (ENSG…QGKY), 331-364 (AEAL…KEAN), 369-402 (ANAL…DPMN), 403-436 (SDVY…RPKF), 444-477 (CFAL…FPRC), 478-511 (AEGY…EPDN), 513-546 (TTYV…DNKC), and 547-580 (DFAY…AKSE).

It belongs to the Tom70 family. As to quaternary structure, forms part of the preprotein translocase complex of the outer mitochondrial membrane (TOM complex) which consists of at least 7 different proteins (TOMM5, TOMM6, TOMM7, TOMM20, TOMM22, TOMM40 and TOMM70). Interacts with CAPN8. Interacts with TRADD, TRAF6 and STING. Interacts with MAVS. Interacts with HSPA8 and HSP90AA1; both interactions are required for preprotein mitochondrial import. The interaction with HSP90AA1 is direct and mediates the association of TOMM70 with IRF3 and TBK1. Upon mitochondrial depolarization, interacts with PINK1; the interaction is required for PINK1-TOM-TIM23 supercomplex formation which is critical for PINK1 stabilization at the outer mitochondrial membrane, kinase activation and downstream mitophagy.

It localises to the mitochondrion outer membrane. In terms of biological role, acts as a receptor of the preprotein translocase complex of the outer mitochondrial membrane (TOM complex). Recognizes and mediates the translocation of mitochondrial preproteins from the cytosol into the mitochondria in a chaperone dependent manner. Mediates TBK1 and IRF3 activation induced by MAVS in response to Sendai virus infection and promotes host antiviral responses during virus infection. The protein is Mitochondrial import receptor subunit TOM70 of Rattus norvegicus (Rat).